A 70-amino-acid chain; its full sequence is Small ribosomal subunit protein bS21 (70 aa).

Positions 48 to 61 are enriched in basic residues; the sequence is KLAAAVKRQSKRLR. The interval 48-70 is disordered; that stretch reads KLAAAVKRQSKRLRSQQLPPKMY.

The protein belongs to the bacterial ribosomal protein bS21 family.

The sequence is that of Small ribosomal subunit protein bS21 from Thiobacillus denitrificans (strain ATCC 25259 / T1).